Reading from the N-terminus, the 196-residue chain is MPIGVPRVPFRSPGEEDASWVDIYNRLYRERLLFLGQEVDSEISNQLISLMVYLSIEEENKDLYLFINSPGGWVIPGIAIYDTMQFVQPDVQTVCMGLAASMGSFLLAGGEITKRLAFPHARVMIHQPASSFYEAQTGEFILEAEELLKMRETITRVYVQRTGKPLWVISEDMERDVFMSAAEAQAHGIVDLVAVE.

The active-site Nucleophile is Ser-101. His-126 is an active-site residue.

The protein belongs to the peptidase S14 family. In terms of assembly, component of the chloroplastic Clp protease core complex.

It is found in the plastid. The protein localises to the chloroplast stroma. It carries out the reaction Hydrolysis of proteins to small peptides in the presence of ATP and magnesium. alpha-casein is the usual test substrate. In the absence of ATP, only oligopeptides shorter than five residues are hydrolyzed (such as succinyl-Leu-Tyr-|-NHMec, and Leu-Tyr-Leu-|-Tyr-Trp, in which cleavage of the -Tyr-|-Leu- and -Tyr-|-Trp bonds also occurs).. Functionally, cleaves peptides in various proteins in a process that requires ATP hydrolysis. Has a chymotrypsin-like activity. Plays a major role in the degradation of misfolded proteins. The polypeptide is ATP-dependent Clp protease proteolytic subunit (Glycine max (Soybean)).